A 344-amino-acid polypeptide reads, in one-letter code: Methionine synthase (344 aa).

Positions 211, 213, 236, and 315 each coordinate Zn(2+).

This sequence belongs to the archaeal MetE family. Zn(2+) is required as a cofactor.

It functions in the pathway amino-acid biosynthesis; L-methionine biosynthesis via de novo pathway. Catalyzes the transfer of a methyl group to L-homocysteine resulting in methionine formation. The physiological methyl donor is unknown. In Thermoplasma volcanium (strain ATCC 51530 / DSM 4299 / JCM 9571 / NBRC 15438 / GSS1), this protein is Methionine synthase.